A 1909-amino-acid chain; its full sequence is Nck-associated protein 5 (1909 aa).

A coiled-coil region spans residues 71–253; it reads EKLIHELEEE…DLEQQNRTLS (183 aa). 8 disordered regions span residues 351-370, 736-819, 855-997, 1026-1469, 1486-1509, 1541-1592, 1725-1750, and 1763-1885; these read SSYT…SQNW, EEDT…LMEP, PLFE…KKPS, SSSF…APLS, KGQV…FASW, GFGN…RTPQ, FPLP…DAEP, and SMRA…DYGD. The span at 736 to 748 shows a compositional bias: basic and acidic residues; sequence EEDTEKNIPKDNV. Composition is skewed to polar residues over residues 753 to 789, 950 to 965, 981 to 990, and 1066 to 1084; these read RVST…SRSS, APSS…SETA, VISSNPATTE, and PRIS…SKSV. 2 stretches are compositionally biased toward low complexity: residues 1110-1131 and 1178-1187; these read SPSS…HNSP and ASKSSVAVNK. Positions 1241–1250 are enriched in basic and acidic residues; sequence DGRDGVDNRS. The span at 1300 to 1325 shows a compositional bias: polar residues; it reads QIITNTAERGNSLTRQNSSTESSPNK. Residues 1339–1366 show a composition bias toward low complexity; that stretch reads GRPSGHPSSGKGSLGSSGSFSSQHGSPS. Positions 1428–1446 are enriched in polar residues; sequence PGRTQHPSTFETSSTSKLE. Residues 1454–1466 show a composition bias toward low complexity; that stretch reads ASATATDAVSSEA. Composition is skewed to basic and acidic residues over residues 1547–1560 and 1567–1576; these read LKSE…KPEL and ELIKDTKSAD. Polar residues predominate over residues 1869–1878; that stretch reads YSASGGSNSD.

Interacts with the SH3-containing region of the adapter protein NCK. In terms of tissue distribution, expressed in fetal and adult brain, leukocytes and fetal fibroblasts.

This Homo sapiens (Human) protein is Nck-associated protein 5 (NCKAP5).